A 405-amino-acid chain; its full sequence is Dihydrolipoyllysine-residue succinyltransferase component of 2-oxoglutarate dehydrogenase complex (405 aa).

In terms of domain architecture, Lipoyl-binding spans 3-78; that stretch reads SVDILVPDLP…TSRQILGRLR (76 aa). K44 carries the post-translational modification N6-lipoyllysine. Positions 75–111 are disordered; sequence GRLREGNSAGKETSAKSEEKASTPAQRQQASLEEQNN. Over residues 97–111 the composition is skewed to polar residues; the sequence is TPAQRQQASLEEQNN. Residues 113 to 150 enclose the Peripheral subunit-binding (PSBD) domain; it reads ALSPAIRRLLAEHNLDASAIKGTGVGGRLTREDVEKHL. K148 carries the N6-acetyllysine modification. The segment covering 153-173 has biased composition (low complexity); sequence APAKESAPAAAAPAAQPALAA. The disordered stretch occupies residues 153-178; that stretch reads APAKESAPAAAAPAAQPALAARSEKR. Active-site residues include H376 and D380.

It belongs to the 2-oxoacid dehydrogenase family. Forms a 24-polypeptide structural core with octahedral symmetry. Part of the 2-oxoglutarate dehydrogenase (OGDH) complex composed of E1 (2-oxoglutarate dehydrogenase), E2 (dihydrolipoamide succinyltransferase) and E3 (dihydrolipoamide dehydrogenase); the complex contains multiple copies of the three enzymatic components (E1, E2 and E3). Interacts with SucA (via N-terminus), the E1 component of OGDH complex. It depends on (R)-lipoate as a cofactor.

The catalysed reaction is N(6)-[(R)-dihydrolipoyl]-L-lysyl-[protein] + succinyl-CoA = N(6)-[(R)-S(8)-succinyldihydrolipoyl]-L-lysyl-[protein] + CoA. The protein operates within amino-acid degradation; L-lysine degradation via saccharopine pathway; glutaryl-CoA from L-lysine: step 6/6. E2 component of the 2-oxoglutarate dehydrogenase (OGDH) complex which catalyzes the second step in the conversion of 2-oxoglutarate to succinyl-CoA and CO(2). The chain is Dihydrolipoyllysine-residue succinyltransferase component of 2-oxoglutarate dehydrogenase complex (sucB) from Escherichia coli O157:H7.